Reading from the N-terminus, the 140-residue chain is uncharacterized protein (140 aa).

This is an uncharacterized protein from Acholeplasma phage L2 (Bacteriophage L2).